Consider the following 275-residue polypeptide: NH(3)-dependent NAD(+) synthetase (275 aa).

46–53 (GISGGQDS) is an ATP binding site. Mg(2+) is bound at residue aspartate 52. Residue arginine 140 participates in deamido-NAD(+) binding. Residue threonine 160 coordinates ATP. Glutamate 165 contributes to the Mg(2+) binding site. Deamido-NAD(+)-binding residues include lysine 173 and aspartate 180. Residues lysine 189 and threonine 211 each contribute to the ATP site. 260–261 (HK) lines the deamido-NAD(+) pocket.

This sequence belongs to the NAD synthetase family. As to quaternary structure, homodimer.

The catalysed reaction is deamido-NAD(+) + NH4(+) + ATP = AMP + diphosphate + NAD(+) + H(+). It functions in the pathway cofactor biosynthesis; NAD(+) biosynthesis; NAD(+) from deamido-NAD(+) (ammonia route): step 1/1. Functionally, catalyzes the ATP-dependent amidation of deamido-NAD to form NAD. Uses ammonia as a nitrogen source. This is NH(3)-dependent NAD(+) synthetase from Escherichia fergusonii (strain ATCC 35469 / DSM 13698 / CCUG 18766 / IAM 14443 / JCM 21226 / LMG 7866 / NBRC 102419 / NCTC 12128 / CDC 0568-73).